A 510-amino-acid chain; its full sequence is MKDILEQLEDRRAAARLGGGQKRIDAQHGRGKLTARERVDLLLDEGSFEEFDMFVTHRCTDFNMQDQKPAGDGVVTGWGTINGRVVYVFSQDFTVLGGSVSETHSKKICKIMDMAMQNGAPVIGINDSGGARIQEGVDSLAGYGEVFQRNIMASGVVPQISMIMGPCAGGAVYSPAMTDFIFMVKDSSYMFVTGPDVVKTVTNEQVSAEELGGATTHTRKSSVADAAFENDVEALAEVRRLVDFLPLNNREKPPVRPFFDDPDRIEPSLDTLVPDNPNTPYDMKELIHKLADEGDFYEIQEEFAKNIITGFIRLEGRTVGVVANQPLVLAGCLDIDSSRKAARFVRFCDAFEIPLLTLIDVPGFLPGTSQEYGGVIKHGAKLLYAYGEATVPMVTVITRKAYGGAYVVMSSKHLRADFNYAWPTAEVAVMGAKGATEIIHRGDLGDPEKIAQHTADYEERFANPFVASERGFVDEVIQPRSTRKRVARAFASLRNKSVQMPWKKHDNIPL.

Positions M1–P257 constitute a CoA carboxyltransferase N-terminal domain. Positions M1 to K504 are carboxyltransferase. One can recognise a CoA carboxyltransferase C-terminal domain in the interval D261–K504. The interval D292 to Q325 is acyl-CoA binding.

This sequence belongs to the AccD/PCCB family. As to quaternary structure, the holoenzyme is a dodecamer composed of 6 PccA/alpha subunits and 6 PccB/beta subunits.

It catalyses the reaction propanoyl-CoA + hydrogencarbonate + ATP = (S)-methylmalonyl-CoA + ADP + phosphate + H(+). It participates in metabolic intermediate metabolism; propanoyl-CoA degradation; succinyl-CoA from propanoyl-CoA: step 1/3. Its function is as follows. This is one of the 2 subunits of the biotin-dependent propionyl-CoA carboxylase (PCC), the enzyme catalyzing the carboxylation of propionyl-CoA/propanoyl-CoA to D-methylmalonyl-CoA/(S)-methylmalonyl-CoA. Within the holoenzyme, the alpha subunit catalyzes the ATP-dependent carboxylation of the biotin carried by the biotin carboxyl carrier (BCC) domain, while the beta subunit then tranfers the carboxyl group from carboxylated biotin to propionyl-CoA. This Roseobacter denitrificans (strain ATCC 33942 / OCh 114) (Erythrobacter sp. (strain OCh 114)) protein is Propionyl-CoA carboxylase beta chain.